The primary structure comprises 289 residues: ATP synthase gamma chain (289 aa).

Belongs to the ATPase gamma chain family. As to quaternary structure, F-type ATPases have 2 components, CF(1) - the catalytic core - and CF(0) - the membrane proton channel. CF(1) has five subunits: alpha(3), beta(3), gamma(1), delta(1), epsilon(1). CF(0) has three main subunits: a, b and c.

The protein localises to the cell inner membrane. Its function is as follows. Produces ATP from ADP in the presence of a proton gradient across the membrane. The gamma chain is believed to be important in regulating ATPase activity and the flow of protons through the CF(0) complex. This chain is ATP synthase gamma chain, found in Cereibacter sphaeroides (strain ATCC 17023 / DSM 158 / JCM 6121 / CCUG 31486 / LMG 2827 / NBRC 12203 / NCIMB 8253 / ATH 2.4.1.) (Rhodobacter sphaeroides).